Reading from the N-terminus, the 131-residue chain is Peptide methionine sulfoxide reductase MsrB (131 aa).

The 123-residue stretch at 8–130 (LEEWKEMLDP…NSVCLDLVPR (123 aa)) folds into the MsrB domain. The Zn(2+) site is built by Cys47, Cys50, Cys96, and Cys99. Cys119 acts as the Nucleophile in catalysis.

It belongs to the MsrB Met sulfoxide reductase family. It depends on Zn(2+) as a cofactor.

It carries out the reaction L-methionyl-[protein] + [thioredoxin]-disulfide + H2O = L-methionyl-(R)-S-oxide-[protein] + [thioredoxin]-dithiol. This is Peptide methionine sulfoxide reductase MsrB from Pseudomonas savastanoi pv. phaseolicola (strain 1448A / Race 6) (Pseudomonas syringae pv. phaseolicola (strain 1448A / Race 6)).